The chain runs to 217 residues: MSGLSESAKLVKEALEQRGLETPMRPNAVSREEKKEKIEHHMREILTLLQLDLTDDSLEETPHRIAKMYVDEIFSGLDYSNFPKITVIENKMNVSEMVRVKDITVTSTCEHHLVTIDGKAAVAYIPRGKIIGLSKINRIVRFFAQRPQVQERMTQQILVALQTLLESDDVAVTIDATHYCVKSRGVMDATSETTTTALGGIFKSNPATRAEFLHGLR.

3 residues coordinate Zn(2+): Cys109, His112, and Cys180.

This sequence belongs to the GTP cyclohydrolase I family. As to quaternary structure, toroid-shaped homodecamer, composed of two pentamers of five dimers.

It catalyses the reaction GTP + H2O = 7,8-dihydroneopterin 3'-triphosphate + formate + H(+). It participates in cofactor biosynthesis; 7,8-dihydroneopterin triphosphate biosynthesis; 7,8-dihydroneopterin triphosphate from GTP: step 1/1. The sequence is that of GTP cyclohydrolase 1 from Vibrio parahaemolyticus serotype O3:K6 (strain RIMD 2210633).